The sequence spans 354 residues: Selection and upkeep of intraepithelial T-cells protein 10 (354 aa).

Positions Met1–Ser52 are cleaved as a signal peptide. The region spanning Leu53–Val141 is the Ig-like V-type domain. Topologically, residues Leu53–Lys158 are extracellular. A disulfide bridge links Cys71 with Cys125. The N-linked (GlcNAc...) asparagine glycan is linked to Asn129. Residues Phe159–Leu179 traverse the membrane as a helical segment. Residues Asp180–Cys209 lie on the Cytoplasmic side of the membrane. Residues Cys210–Leu230 traverse the membrane as a helical segment. At Lys231–Asp252 the chain is on the extracellular side. A helical transmembrane segment spans residues Ile253–Trp273. Over Thr274–Thr354 the chain is Cytoplasmic.

The protein belongs to the SKINT family. In terms of tissue distribution, expressed in skin and thymus.

The protein resides in the membrane. Its function is as follows. May act by engaging a cell surface molecule on immature T-cells in the embryonic thymus. This chain is Selection and upkeep of intraepithelial T-cells protein 10 (Skint10), found in Mus musculus (Mouse).